The following is a 152-amino-acid chain: Large ribosomal subunit protein uL15 (152 aa).

Belongs to the universal ribosomal protein uL15 family. Part of the 50S ribosomal subunit.

Binds to the 23S rRNA. The protein is Large ribosomal subunit protein uL15 of Staphylothermus marinus (strain ATCC 43588 / DSM 3639 / JCM 9404 / F1).